A 113-amino-acid chain; its full sequence is Protein suex-1 (113 aa).

The signal sequence occupies residues 1–22; it reads MQSLLVFCLATIILSNFTEASA.

The sequence is that of Protein suex-1 from Caenorhabditis elegans.